A 361-amino-acid chain; its full sequence is Phosphoserine aminotransferase (361 aa).

The L-glutamate site is built by Ser9 and Arg42. Residues 76–77 (GR), Trp102, Thr153, Asp173, and Gln196 contribute to the pyridoxal 5'-phosphate site. At Lys197 the chain carries N6-(pyridoxal phosphate)lysine. Pyridoxal 5'-phosphate is bound at residue 238-239 (NT).

Belongs to the class-V pyridoxal-phosphate-dependent aminotransferase family. SerC subfamily. As to quaternary structure, homodimer. Requires pyridoxal 5'-phosphate as cofactor.

The protein resides in the cytoplasm. It catalyses the reaction O-phospho-L-serine + 2-oxoglutarate = 3-phosphooxypyruvate + L-glutamate. The catalysed reaction is 4-(phosphooxy)-L-threonine + 2-oxoglutarate = (R)-3-hydroxy-2-oxo-4-phosphooxybutanoate + L-glutamate. It participates in amino-acid biosynthesis; L-serine biosynthesis; L-serine from 3-phospho-D-glycerate: step 2/3. The protein operates within cofactor biosynthesis; pyridoxine 5'-phosphate biosynthesis; pyridoxine 5'-phosphate from D-erythrose 4-phosphate: step 3/5. Functionally, catalyzes the reversible conversion of 3-phosphohydroxypyruvate to phosphoserine and of 3-hydroxy-2-oxo-4-phosphonooxybutanoate to phosphohydroxythreonine. In Cronobacter sakazakii (strain ATCC BAA-894) (Enterobacter sakazakii), this protein is Phosphoserine aminotransferase.